We begin with the raw amino-acid sequence, 190 residues long: Cytoglobin (190 aa).

The tract at residues 1–21 (MEKVPGDMEIERRERNEELSE) is disordered. The Globin domain occupies 18–167 (ELSEAERKAV…IYSHVTAAYK (150 aa)). Cysteines 38 and 83 form a disulfide. H81 and H113 together coordinate heme b.

Belongs to the globin family. Monomeric. Homodimer; disulfide-linked in vitro. Also homooligomeric in vitro. The formation of an intramolecular disulfide bond between cysteines Cys-38 and Cys-83 specifically enhances the nitrite reductase activity. Widely expressed (at protein level).

It is found in the cytoplasm. Its subcellular location is the nucleus. It carries out the reaction Fe(II)-heme b-[protein] + nitric oxide + O2 = Fe(III)-heme b-[protein] + nitrate. The catalysed reaction is Fe(III)-heme b-[protein] + nitric oxide + H2O = Fe(II)-heme b-[protein] + nitrite + 2 H(+). It catalyses the reaction 2 superoxide + 2 H(+) = H2O2 + O2. The enzyme catalyses H2O2 + AH2 = A + 2 H2O. With respect to regulation, the nitric oxide dioxygenase activity is activated by a reducing system composed of cytochrome b5, its upstream reductase CYB5R3 and NADH. Its function is as follows. Probable multifunctional globin with a hexacoordinated heme iron required for the catalysis of various reactions depending on redox condition of the cell as well as oxygen availability. Has a nitric oxide dioxygenase (NOD) activity and is most probably involved in cell-mediated and oxygen-dependent nitric oxide consumption. By scavenging this second messenger may regulate several biological processes including endothelium-mediated vasodilation and vascular tone. Under normoxic conditions functions as a nitric oxide dioxygenase (NOD) but under hypoxic conditions the globin may switch its function to that of a nitrite (NO2) reductase (NiR), generating nitric oxide. Could also have peroxidase and superoxide dismutase activities, detoxifying reactive oxygen species and protecting cells against oxidative stress. Also binds dioxygen with low affinity and could function as an oxygen sensor but has probably no function as a respiratory oxygen carrier. The protein is Cytoglobin of Rattus norvegicus (Rat).